We begin with the raw amino-acid sequence, 108 residues long: Phosphocarrier protein HPr (108 aa).

The 88-residue stretch at 21-108 (ELQATCIVKN…DAFSSGFGEL (88 aa)) folds into the HPr domain. His-35 acts as the Pros-phosphohistidine intermediate in catalysis.

This sequence belongs to the HPr family.

The protein localises to the cytoplasm. Functionally, general (non sugar-specific) component of the phosphoenolpyruvate-dependent sugar phosphotransferase system (sugar PTS). This major carbohydrate active-transport system catalyzes the phosphorylation of incoming sugar substrates concomitantly with their translocation across the cell membrane. The phosphoryl group from phosphoenolpyruvate (PEP) is transferred to the phosphoryl carrier protein HPr by enzyme I. Phospho-HPr then transfers it to the PTS EIIA domain. The sequence is that of Phosphocarrier protein HPr (ptsH) from Chlamydia pneumoniae (Chlamydophila pneumoniae).